The following is a 303-amino-acid chain: tRNA dimethylallyltransferase 1 (303 aa).

Residue glycine 17–threonine 24 coordinates ATP. Threonine 19–threonine 24 provides a ligand contact to substrate. The interaction with substrate tRNA stretch occupies residues aspartate 42–glutamine 45.

This sequence belongs to the IPP transferase family. Monomer. Mg(2+) serves as cofactor.

The enzyme catalyses adenosine(37) in tRNA + dimethylallyl diphosphate = N(6)-dimethylallyladenosine(37) in tRNA + diphosphate. In terms of biological role, catalyzes the transfer of a dimethylallyl group onto the adenine at position 37 in tRNAs that read codons beginning with uridine, leading to the formation of N6-(dimethylallyl)adenosine (i(6)A). The polypeptide is tRNA dimethylallyltransferase 1 (Hahella chejuensis (strain KCTC 2396)).